We begin with the raw amino-acid sequence, 246 residues long: Mediator of RNA polymerase II transcription subunit 6 (246 aa).

2 disordered regions span residues 165-186 (MKKKEEEKKEEDERKLEERSTN) and 207-246 (EALEKLDVKEEENPKPEEAPSASAVGEPKFAEPAARATTK). 2 stretches are compositionally biased toward basic and acidic residues: residues 166–184 (KKKEEEKKEEDERKLEERS) and 208–224 (ALEKLDVKEEENPKPEE).

It belongs to the Mediator complex subunit 6 family. Component of the Mediator complex. Interacts with let-19/mdt-13. Interacts with RNA polymerase II. Interacts with mdt-28.

Its subcellular location is the nucleus. Component of the Mediator complex, a coactivator involved in the regulated transcription of nearly all RNA polymerase II-dependent genes. Mediator functions as a bridge to convey information from gene-specific regulatory proteins to the basal RNA polymerase II transcription machinery. Mediator is recruited to promoters by direct interactions with regulatory proteins and serves as a scaffold for the assembly of a functional preinitiation complex with RNA polymerase II and the general transcription factors. The chain is Mediator of RNA polymerase II transcription subunit 6 (mdt-6) from Caenorhabditis briggsae.